The sequence spans 187 residues: MFKFVKSSSDYTNWYFHKNSEIAFWGRSNVGKSSLLNALTSKGLAKVSKTPGRTQLINFFENELNQVYVDLPGYGYAKLSKDLKDKMMAMIEEYLLNRSNLKMLYLLIDSRLGFTKIDLEILSFLKENNLNYFIVFTKIDKLNTKEKNELNKKIKTYLEKESFNYLIVSSETKYQIDKLKENINSNF.

The EngB-type G domain maps to Lys-18–Phe-187. Residues Gly-26 to Ser-33, Gly-52 to Leu-56, Asp-70 to Gly-73, Thr-137 to Asp-140, and Val-168 to Ser-170 each bind GTP. Mg(2+) is bound by residues Ser-33 and Thr-54.

This sequence belongs to the TRAFAC class TrmE-Era-EngA-EngB-Septin-like GTPase superfamily. EngB GTPase family. Mg(2+) serves as cofactor.

Its function is as follows. Necessary for normal cell division and for the maintenance of normal septation. The sequence is that of Probable GTP-binding protein EngB from Mycoplasmopsis synoviae (strain 53) (Mycoplasma synoviae).